A 273-amino-acid chain; its full sequence is Pantothenate synthetase (273 aa).

27–34 (MGALHDGH) serves as a coordination point for ATP. H34 (proton donor) is an active-site residue. Q58 serves as a coordination point for (R)-pantoate. Residue Q58 participates in beta-alanine binding. Position 144-147 (144-147 (GKKD)) interacts with ATP. Position 150 (Q150) interacts with (R)-pantoate. ATP contacts are provided by residues V173 and 181–184 (LSSR).

It belongs to the pantothenate synthetase family. In terms of assembly, homodimer.

It is found in the cytoplasm. The enzyme catalyses (R)-pantoate + beta-alanine + ATP = (R)-pantothenate + AMP + diphosphate + H(+). It functions in the pathway cofactor biosynthesis; (R)-pantothenate biosynthesis; (R)-pantothenate from (R)-pantoate and beta-alanine: step 1/1. Catalyzes the condensation of pantoate with beta-alanine in an ATP-dependent reaction via a pantoyl-adenylate intermediate. The polypeptide is Pantothenate synthetase (Campylobacter concisus (strain 13826)).